The primary structure comprises 332 residues: Ferredoxin--NADP reductase 1 (332 aa).

Asp35, Lys43, Phe48, Val88, Phe123, Asp284, and Thr325 together coordinate FAD.

The protein belongs to the ferredoxin--NADP reductase type 2 family. Homodimer. FAD is required as a cofactor.

It catalyses the reaction 2 reduced [2Fe-2S]-[ferredoxin] + NADP(+) + H(+) = 2 oxidized [2Fe-2S]-[ferredoxin] + NADPH. This Listeria monocytogenes serovar 1/2a (strain ATCC BAA-679 / EGD-e) protein is Ferredoxin--NADP reductase 1.